Consider the following 204-residue polypeptide: Thiamine-phosphate synthase (204 aa).

4-amino-2-methyl-5-(diphosphooxymethyl)pyrimidine contacts are provided by residues 37–41 (QVREK) and Asn-69. Mg(2+) contacts are provided by Asp-70 and Asp-89. Position 108 (Ser-108) interacts with 4-amino-2-methyl-5-(diphosphooxymethyl)pyrimidine. 2-[(2R,5Z)-2-carboxy-4-methylthiazol-5(2H)-ylidene]ethyl phosphate is bound at residue 134–136 (TGT). Lys-137 serves as a coordination point for 4-amino-2-methyl-5-(diphosphooxymethyl)pyrimidine. Residues Gly-165 and 185–186 (IS) each bind 2-[(2R,5Z)-2-carboxy-4-methylthiazol-5(2H)-ylidene]ethyl phosphate.

Belongs to the thiamine-phosphate synthase family. Requires Mg(2+) as cofactor.

It catalyses the reaction 2-[(2R,5Z)-2-carboxy-4-methylthiazol-5(2H)-ylidene]ethyl phosphate + 4-amino-2-methyl-5-(diphosphooxymethyl)pyrimidine + 2 H(+) = thiamine phosphate + CO2 + diphosphate. It carries out the reaction 2-(2-carboxy-4-methylthiazol-5-yl)ethyl phosphate + 4-amino-2-methyl-5-(diphosphooxymethyl)pyrimidine + 2 H(+) = thiamine phosphate + CO2 + diphosphate. The enzyme catalyses 4-methyl-5-(2-phosphooxyethyl)-thiazole + 4-amino-2-methyl-5-(diphosphooxymethyl)pyrimidine + H(+) = thiamine phosphate + diphosphate. Its pathway is cofactor biosynthesis; thiamine diphosphate biosynthesis; thiamine phosphate from 4-amino-2-methyl-5-diphosphomethylpyrimidine and 4-methyl-5-(2-phosphoethyl)-thiazole: step 1/1. Functionally, condenses 4-methyl-5-(beta-hydroxyethyl)thiazole monophosphate (THZ-P) and 2-methyl-4-amino-5-hydroxymethyl pyrimidine pyrophosphate (HMP-PP) to form thiamine monophosphate (TMP). This Clostridium novyi (strain NT) protein is Thiamine-phosphate synthase.